The chain runs to 100 residues: Aspartyl/glutamyl-tRNA(Asn/Gln) amidotransferase subunit C (100 aa).

Belongs to the GatC family. In terms of assembly, heterotrimer of A, B and C subunits.

The enzyme catalyses L-glutamyl-tRNA(Gln) + L-glutamine + ATP + H2O = L-glutaminyl-tRNA(Gln) + L-glutamate + ADP + phosphate + H(+). It carries out the reaction L-aspartyl-tRNA(Asn) + L-glutamine + ATP + H2O = L-asparaginyl-tRNA(Asn) + L-glutamate + ADP + phosphate + 2 H(+). In terms of biological role, allows the formation of correctly charged Asn-tRNA(Asn) or Gln-tRNA(Gln) through the transamidation of misacylated Asp-tRNA(Asn) or Glu-tRNA(Gln) in organisms which lack either or both of asparaginyl-tRNA or glutaminyl-tRNA synthetases. The reaction takes place in the presence of glutamine and ATP through an activated phospho-Asp-tRNA(Asn) or phospho-Glu-tRNA(Gln). This Rickettsia africae (strain ESF-5) protein is Aspartyl/glutamyl-tRNA(Asn/Gln) amidotransferase subunit C.